A 476-amino-acid chain; its full sequence is ENTH domain-containing protein C794.11c (476 aa).

One can recognise an ENTH domain in the interval 30 to 154 (YTSMEARVRE…VELLNDSERI (125 aa)). Disordered stretches follow at residues 157–198 (ERKR…GSYR), 213–308 (NGYH…GFGD), 410–429 (QAGLGLTSQQPTAAKSSGSN), and 444–472 (VHQENSTRERVVSSSSEPVSKTQNFLDND). Ser-173 bears the Phosphoserine mark. Low complexity-rich tracts occupy residues 178-198 (RISTSSKSRFPSFGSSRGSYR) and 213-222 (NGYHDSSSMS). The residue at position 228 (Ser-228) is a Phosphoserine. Residues 229-240 (DNDVEEYNEDGD) show a composition bias toward acidic residues. Tyr-235 carries the post-translational modification Phosphotyrosine. A phosphoserine mark is found at Ser-243 and Ser-244. Positions 262–271 (QSDKAPEQPK) are enriched in basic and acidic residues. Over residues 444 to 454 (VHQENSTRERV) the composition is skewed to basic and acidic residues. A Phosphoserine modification is found at Ser-459.

This Schizosaccharomyces pombe (strain 972 / ATCC 24843) (Fission yeast) protein is ENTH domain-containing protein C794.11c.